Consider the following 61-residue polypeptide: UPF0434 protein Bfl377 (61 aa).

Belongs to the UPF0434 family.

The sequence is that of UPF0434 protein Bfl377 from Blochmanniella floridana.